Reading from the N-terminus, the 108-residue chain is UPF0060 membrane protein Rsph17029_0436 (108 aa).

4 consecutive transmembrane segments (helical) span residues Leu-5–Trp-25, Ala-32–Thr-52, Ala-62–Val-82, and Arg-86–Pro-106.

It belongs to the UPF0060 family.

It localises to the cell inner membrane. The chain is UPF0060 membrane protein Rsph17029_0436 from Cereibacter sphaeroides (strain ATCC 17029 / ATH 2.4.9) (Rhodobacter sphaeroides).